The sequence spans 241 residues: Lipopolysaccharide export system ATP-binding protein LptB (241 aa).

The 233-residue stretch at 5–237 folds into the ABC transporter domain; that stretch reads LQAQSLFKSY…PMVRQVYLGD (233 aa). 37 to 44 contacts ATP; the sequence is GPNGAGKT.

It belongs to the ABC transporter superfamily. Outer membrane lipopolysaccharide export (TC 1.B.42) family. As to quaternary structure, component of the lipopolysaccharide transport and assembly complex. The LptBFG transporter is composed of two ATP-binding proteins (LptB) and two transmembrane proteins (LptF and LptG).

It is found in the cytoplasm. Its subcellular location is the cell inner membrane. Part of the ABC transporter complex LptBFG involved in the translocation of lipopolysaccharide (LPS) from the inner membrane to the outer membrane. Probably responsible for energy coupling to the transport system. The polypeptide is Lipopolysaccharide export system ATP-binding protein LptB (lptB) (Acidithiobacillus ferridurans).